A 737-amino-acid chain; its full sequence is Phosphoribosylformylglycinamidine synthase subunit PurL (737 aa).

His-50 is an active-site residue. Residues Tyr-53 and Lys-92 each contribute to the ATP site. Glu-94 is a Mg(2+) binding site. Substrate is bound by residues 95–98 and Arg-117; that span reads SHNH. His-96 (proton acceptor) is an active-site residue. A Mg(2+)-binding site is contributed by Asp-118. Gln-241 contributes to the substrate binding site. Asp-269 contacts Mg(2+). 313–315 provides a ligand contact to substrate; sequence ESQ. The ATP site is built by Asp-495 and Gly-532. Asn-533 is a Mg(2+) binding site. Position 535 (Ser-535) interacts with substrate.

It belongs to the FGAMS family. As to quaternary structure, monomer. Part of the FGAM synthase complex composed of 1 PurL, 1 PurQ and 2 PurS subunits.

The protein localises to the cytoplasm. The enzyme catalyses N(2)-formyl-N(1)-(5-phospho-beta-D-ribosyl)glycinamide + L-glutamine + ATP + H2O = 2-formamido-N(1)-(5-O-phospho-beta-D-ribosyl)acetamidine + L-glutamate + ADP + phosphate + H(+). Its pathway is purine metabolism; IMP biosynthesis via de novo pathway; 5-amino-1-(5-phospho-D-ribosyl)imidazole from N(2)-formyl-N(1)-(5-phospho-D-ribosyl)glycinamide: step 1/2. Functionally, part of the phosphoribosylformylglycinamidine synthase complex involved in the purines biosynthetic pathway. Catalyzes the ATP-dependent conversion of formylglycinamide ribonucleotide (FGAR) and glutamine to yield formylglycinamidine ribonucleotide (FGAM) and glutamate. The FGAM synthase complex is composed of three subunits. PurQ produces an ammonia molecule by converting glutamine to glutamate. PurL transfers the ammonia molecule to FGAR to form FGAM in an ATP-dependent manner. PurS interacts with PurQ and PurL and is thought to assist in the transfer of the ammonia molecule from PurQ to PurL. The chain is Phosphoribosylformylglycinamidine synthase subunit PurL from Bartonella bacilliformis (strain ATCC 35685 / KC583 / Herrer 020/F12,63).